We begin with the raw amino-acid sequence, 168 residues long: 3-dehydroquinate dehydratase (168 aa).

Tyr-22 (proton acceptor) is an active-site residue. 3 residues coordinate substrate: Asn-76, His-82, and Asp-89. His-102 acts as the Proton donor in catalysis. Residues 103 to 104 (LT) and Arg-113 each bind substrate.

This sequence belongs to the type-II 3-dehydroquinase family. In terms of assembly, homododecamer.

It carries out the reaction 3-dehydroquinate = 3-dehydroshikimate + H2O. Its pathway is metabolic intermediate biosynthesis; chorismate biosynthesis; chorismate from D-erythrose 4-phosphate and phosphoenolpyruvate: step 3/7. Functionally, catalyzes a trans-dehydration via an enolate intermediate. The polypeptide is 3-dehydroquinate dehydratase (Helicobacter acinonychis (strain Sheeba)).